The sequence spans 150 residues: Globin-3 (150 aa).

In terms of domain architecture, Globin spans 11–150 (PLSAAEKTKI…MICILLRSAY (140 aa)). Heme b is bound by residues H74 and H106.

This sequence belongs to the globin family. In terms of assembly, monomer.

This chain is Globin-3, found in Petromyzon marinus (Sea lamprey).